The sequence spans 530 residues: Bifunctional purine biosynthesis protein PurH (530 aa).

Residues 1–148 (MEQARPIRRA…KNHKDVAIVV (148 aa)) form the MGS-like domain.

It belongs to the PurH family.

The catalysed reaction is (6R)-10-formyltetrahydrofolate + 5-amino-1-(5-phospho-beta-D-ribosyl)imidazole-4-carboxamide = 5-formamido-1-(5-phospho-D-ribosyl)imidazole-4-carboxamide + (6S)-5,6,7,8-tetrahydrofolate. The enzyme catalyses IMP + H2O = 5-formamido-1-(5-phospho-D-ribosyl)imidazole-4-carboxamide. The protein operates within purine metabolism; IMP biosynthesis via de novo pathway; 5-formamido-1-(5-phospho-D-ribosyl)imidazole-4-carboxamide from 5-amino-1-(5-phospho-D-ribosyl)imidazole-4-carboxamide (10-formyl THF route): step 1/1. It functions in the pathway purine metabolism; IMP biosynthesis via de novo pathway; IMP from 5-formamido-1-(5-phospho-D-ribosyl)imidazole-4-carboxamide: step 1/1. The polypeptide is Bifunctional purine biosynthesis protein PurH (Aeromonas hydrophila subsp. hydrophila (strain ATCC 7966 / DSM 30187 / BCRC 13018 / CCUG 14551 / JCM 1027 / KCTC 2358 / NCIMB 9240 / NCTC 8049)).